Consider the following 376-residue polypeptide: 23S rRNA (uracil(747)-C(5))-methyltransferase RlmC (376 aa).

Cysteine 3, cysteine 11, cysteine 14, and cysteine 87 together coordinate [4Fe-4S] cluster. S-adenosyl-L-methionine contacts are provided by glutamine 212, phenylalanine 241, glutamate 262, and asparagine 307. The active-site Nucleophile is the cysteine 334.

The protein belongs to the class I-like SAM-binding methyltransferase superfamily. RNA M5U methyltransferase family. RlmC subfamily.

The enzyme catalyses uridine(747) in 23S rRNA + S-adenosyl-L-methionine = 5-methyluridine(747) in 23S rRNA + S-adenosyl-L-homocysteine + H(+). Catalyzes the formation of 5-methyl-uridine at position 747 (m5U747) in 23S rRNA. This is 23S rRNA (uracil(747)-C(5))-methyltransferase RlmC from Salmonella choleraesuis (strain SC-B67).